We begin with the raw amino-acid sequence, 90 residues long: Genome polyprotein (90 aa).

It belongs to the potyviridae genome polyprotein family. Post-translationally, genome polyprotein of potyviruses undergoes post-translational proteolytic processing by the main proteinase NIa-pro resulting in the production of at least ten individual proteins. The P1 proteinase and the HC-pro cleave only their respective C-termini autocatalytically. 6K1 is essential for proper proteolytic separation of P3 from CI.

The protein localises to the virion. Involved in aphid transmission, cell-to-cell and systemis movement, encapsidation of the viral RNA and in the regulation of viral RNA amplification. In Gloriosa stripe mosaic virus (GSMV), this protein is Genome polyprotein.